We begin with the raw amino-acid sequence, 186 residues long: Probable calcium-binding protein CML25 (186 aa).

A compositionally biased stretch (low complexity) spans 1–17 (MFNKNQGSNGGSSSNVG). The disordered stretch occupies residues 1-23 (MFNKNQGSNGGSSSNVGIGADSP). 4 consecutive EF-hand domains span residues 33–68 (TEIR…LGHE), 69–104 (VPEE…GMDQ), 106–141 (DVLE…LGDE), and 142–177 (CSIA…GSRR). Residues Asp-46, Asn-48, Asp-50, Lys-52, and Glu-57 each coordinate Ca(2+). Ca(2+)-binding residues include Asp-119, Asp-121, Asn-123, Ser-125, Glu-130, Asp-155, Asp-157, Asp-159, Thr-161, and Glu-166.

Functionally, potential calcium sensor. The chain is Probable calcium-binding protein CML25 (CML25) from Arabidopsis thaliana (Mouse-ear cress).